Here is a 327-residue protein sequence, read N- to C-terminus: Glycerol-3-phosphate dehydrogenase [NAD(P)+] (327 aa).

NADPH is bound by residues S10, F11, R31, and K108. Residues K108, G136, and S138 each coordinate sn-glycerol 3-phosphate. Residue A140 participates in NADPH binding. 5 residues coordinate sn-glycerol 3-phosphate: K191, D246, S256, R257, and N258. K191 functions as the Proton acceptor in the catalytic mechanism. An NADPH-binding site is contributed by R257. Residues L281 and E283 each coordinate NADPH.

Belongs to the NAD-dependent glycerol-3-phosphate dehydrogenase family.

It is found in the cytoplasm. The enzyme catalyses sn-glycerol 3-phosphate + NAD(+) = dihydroxyacetone phosphate + NADH + H(+). It carries out the reaction sn-glycerol 3-phosphate + NADP(+) = dihydroxyacetone phosphate + NADPH + H(+). The protein operates within membrane lipid metabolism; glycerophospholipid metabolism. In terms of biological role, catalyzes the reduction of the glycolytic intermediate dihydroxyacetone phosphate (DHAP) to sn-glycerol 3-phosphate (G3P), the key precursor for phospholipid synthesis. This chain is Glycerol-3-phosphate dehydrogenase [NAD(P)+], found in Ehrlichia ruminantium (strain Welgevonden).